We begin with the raw amino-acid sequence, 408 residues long: Histidine--tRNA ligase (408 aa).

This sequence belongs to the class-II aminoacyl-tRNA synthetase family. Homodimer.

The protein resides in the cytoplasm. The enzyme catalyses tRNA(His) + L-histidine + ATP = L-histidyl-tRNA(His) + AMP + diphosphate + H(+). In Campylobacter jejuni subsp. jejuni serotype O:23/36 (strain 81-176), this protein is Histidine--tRNA ligase.